The sequence spans 210 residues: Uridine kinase (210 aa).

12 to 19 (GGSGSGKT) lines the ATP pocket.

This sequence belongs to the uridine kinase family.

The protein localises to the cytoplasm. The enzyme catalyses uridine + ATP = UMP + ADP + H(+). It catalyses the reaction cytidine + ATP = CMP + ADP + H(+). It functions in the pathway pyrimidine metabolism; CTP biosynthesis via salvage pathway; CTP from cytidine: step 1/3. The protein operates within pyrimidine metabolism; UMP biosynthesis via salvage pathway; UMP from uridine: step 1/1. The protein is Uridine kinase of Bacillus pumilus (strain SAFR-032).